Here is a 233-residue protein sequence, read N- to C-terminus: Nickel import system ATP-binding protein NikE (233 aa).

An ABC transporter domain is found at 2-228; it reads IELKHVTFGY…DRHPYTKELV (227 aa). 35–42 provides a ligand contact to ATP; that stretch reads GESGCGKS.

This sequence belongs to the ABC transporter superfamily. The complex is composed of two ATP-binding proteins (NikD and NikE), two transmembrane proteins (NikB and NikC) and a solute-binding protein (NikA).

Its subcellular location is the cell membrane. It carries out the reaction Ni(2+)(out) + ATP + H2O = Ni(2+)(in) + ADP + phosphate + H(+). Its function is as follows. Part of the ABC transporter complex NikABCDE (Opp2) involved in nickel import. Probably responsible for energy coupling to the transport system. The protein is Nickel import system ATP-binding protein NikE of Staphylococcus aureus (strain MSSA476).